The primary structure comprises 319 residues: ATP-dependent 6-phosphofructokinase (319 aa).

Residue glycine 11 participates in ATP binding. Residues 21–25 (RSVVR) and aspartate 59 each bind ADP. Residues 72-73 (RC) and 102-105 (GDGS) each bind ATP. A Mg(2+)-binding site is contributed by aspartate 103. 125–127 (TID) lines the substrate pocket. Aspartate 127 serves as the catalytic Proton acceptor. Residue arginine 154 participates in ADP binding. Substrate-binding positions include arginine 162 and 169 to 171 (MGR). Residues 185 to 187 (GAE), arginine 211, and 213 to 215 (KKH) each bind ADP. Residues glutamate 222, arginine 243, and 249-252 (HVQR) each bind substrate.

This sequence belongs to the phosphofructokinase type A (PFKA) family. ATP-dependent PFK group I subfamily. Prokaryotic clade 'B1' sub-subfamily. In terms of assembly, homotetramer. Mg(2+) is required as a cofactor.

The protein localises to the cytoplasm. It carries out the reaction beta-D-fructose 6-phosphate + ATP = beta-D-fructose 1,6-bisphosphate + ADP + H(+). The protein operates within carbohydrate degradation; glycolysis; D-glyceraldehyde 3-phosphate and glycerone phosphate from D-glucose: step 3/4. With respect to regulation, allosterically activated by ADP and other diphosphonucleosides, and allosterically inhibited by phosphoenolpyruvate. Its function is as follows. Catalyzes the phosphorylation of D-fructose 6-phosphate to fructose 1,6-bisphosphate by ATP, the first committing step of glycolysis. The protein is ATP-dependent 6-phosphofructokinase of Geobacillus stearothermophilus (Bacillus stearothermophilus).